Reading from the N-terminus, the 300-residue chain is MDEYHIPVLLDEILSFLVKEKNGIYIDTTFGGGGHSLSLLNKLSNKGRVIAFDKDIDSIKNNNILDARFNLIKTNYRFIKKKIKLFNLNKVSGILADLGISSHQINSPKRGFSIRYNSILDMRMDTYNKINAQHIINNYSYNELYNLLIRFGEVKNAKNISKLILKHRKKKYIKSTFDLIKILNFFYKKKNKFLSKIFQSLRIEVNDEINALKDLLKNSLSILKPGGRIAVISYHSIEDRIVKKFLKTGNFNGIIPYDEYGNNLSPLILLEPRIIFSSKEEKKENNRSRSAILRIAEKKI.

S-adenosyl-L-methionine is bound by residues Gly-33 to His-35, Asp-53, Phe-78, Asp-97, and Gln-104.

Belongs to the methyltransferase superfamily. RsmH family.

It is found in the cytoplasm. The catalysed reaction is cytidine(1402) in 16S rRNA + S-adenosyl-L-methionine = N(4)-methylcytidine(1402) in 16S rRNA + S-adenosyl-L-homocysteine + H(+). Specifically methylates the N4 position of cytidine in position 1402 (C1402) of 16S rRNA. This chain is Ribosomal RNA small subunit methyltransferase H, found in Karelsulcia muelleri (strain GWSS) (Sulcia muelleri).